We begin with the raw amino-acid sequence, 680 residues long: DNA-directed RNA polymerase subunit beta' (680 aa).

Zn(2+) is bound by residues Cys-68, Cys-70, Cys-86, and Cys-89. Positions 488, 490, and 492 each coordinate Mg(2+).

This sequence belongs to the RNA polymerase beta' chain family. RpoC1 subfamily. In terms of assembly, in plastids the minimal PEP RNA polymerase catalytic core is composed of four subunits: alpha, beta, beta', and beta''. When a (nuclear-encoded) sigma factor is associated with the core the holoenzyme is formed, which can initiate transcription. It depends on Mg(2+) as a cofactor. The cofactor is Zn(2+).

The protein localises to the plastid. The protein resides in the chloroplast. It catalyses the reaction RNA(n) + a ribonucleoside 5'-triphosphate = RNA(n+1) + diphosphate. DNA-dependent RNA polymerase catalyzes the transcription of DNA into RNA using the four ribonucleoside triphosphates as substrates. The sequence is that of DNA-directed RNA polymerase subunit beta' from Nicotiana tabacum (Common tobacco).